Here is a 414-residue protein sequence, read N- to C-terminus: Glucose-1-phosphate adenylyltransferase (414 aa).

Alpha-D-glucose 1-phosphate contacts are provided by residues Gly-164, 184–185 (EK), and Ser-204.

The protein belongs to the bacterial/plant glucose-1-phosphate adenylyltransferase family. As to quaternary structure, homotetramer.

The catalysed reaction is alpha-D-glucose 1-phosphate + ATP + H(+) = ADP-alpha-D-glucose + diphosphate. It participates in glycan biosynthesis; glycogen biosynthesis. Functionally, involved in the biosynthesis of ADP-glucose, a building block required for the elongation reactions to produce glycogen. Catalyzes the reaction between ATP and alpha-D-glucose 1-phosphate (G1P) to produce pyrophosphate and ADP-Glc. This Acidothermus cellulolyticus (strain ATCC 43068 / DSM 8971 / 11B) protein is Glucose-1-phosphate adenylyltransferase.